Here is a 201-residue protein sequence, read N- to C-terminus: Peptide deformylase (201 aa).

Residues C121 and H163 each contribute to the Fe cation site. The active site involves E164. Fe cation is bound at residue H167.

Belongs to the polypeptide deformylase family. It depends on Fe(2+) as a cofactor.

The catalysed reaction is N-terminal N-formyl-L-methionyl-[peptide] + H2O = N-terminal L-methionyl-[peptide] + formate. Its function is as follows. Removes the formyl group from the N-terminal Met of newly synthesized proteins. Requires at least a dipeptide for an efficient rate of reaction. N-terminal L-methionine is a prerequisite for activity but the enzyme has broad specificity at other positions. This Synechococcus sp. (strain CC9605) protein is Peptide deformylase.